Reading from the N-terminus, the 258-residue chain is Chymotrypsin-2 (258 aa).

The first 17 residues, 1 to 17 (MLRKVFAVVSVLLVVSA), serve as a signal peptide directing secretion. The propeptide at 18–32 (AKVTKLVLDDHYVNR) is activation peptide. A Peptidase S1 domain is found at 33–255 (VVGGEVAKNG…YHEWVRTTMA (223 aa)). Cysteine 59 and cysteine 75 are joined by a disulfide. Residues histidine 74 and aspartate 119 each act as charge relay system in the active site. Disulfide bonds link cysteine 182-cysteine 198 and cysteine 208-cysteine 232. Catalysis depends on serine 212, which acts as the Charge relay system.

This sequence belongs to the peptidase S1 family. As to expression, after blood feeding, expression is induced in the midgut epithelium, followed by secretion into the midgut lumen.

It localises to the secreted. It catalyses the reaction Preferential cleavage: Tyr-|-Xaa, Trp-|-Xaa, Phe-|-Xaa, Leu-|-Xaa.. This Anopheles gambiae (African malaria mosquito) protein is Chymotrypsin-2 (CHYM2).